We begin with the raw amino-acid sequence, 100 residues long: ATP synthase subunit c (100 aa).

Helical transmembrane passes span serine 27 to glycine 47 and phenylalanine 72 to valine 92.

It belongs to the ATPase C chain family. In terms of assembly, F-type ATPases have 2 components, F(1) - the catalytic core - and F(0) - the membrane proton channel. F(1) has five subunits: alpha(3), beta(3), gamma(1), delta(1), epsilon(1). F(0) has three main subunits: a(1), b(2) and c(10-14). The alpha and beta chains form an alternating ring which encloses part of the gamma chain. F(1) is attached to F(0) by a central stalk formed by the gamma and epsilon chains, while a peripheral stalk is formed by the delta and b chains.

The protein localises to the cell inner membrane. Its function is as follows. F(1)F(0) ATP synthase produces ATP from ADP in the presence of a proton or sodium gradient. F-type ATPases consist of two structural domains, F(1) containing the extramembraneous catalytic core and F(0) containing the membrane proton channel, linked together by a central stalk and a peripheral stalk. During catalysis, ATP synthesis in the catalytic domain of F(1) is coupled via a rotary mechanism of the central stalk subunits to proton translocation. Key component of the F(0) channel; it plays a direct role in translocation across the membrane. A homomeric c-ring of between 10-14 subunits forms the central stalk rotor element with the F(1) delta and epsilon subunits. This chain is ATP synthase subunit c, found in Campylobacter concisus (strain 13826).